The chain runs to 186 residues: Ribosome-recycling factor (186 aa).

The protein belongs to the RRF family.

It is found in the cytoplasm. In terms of biological role, responsible for the release of ribosomes from messenger RNA at the termination of protein biosynthesis. May increase the efficiency of translation by recycling ribosomes from one round of translation to another. The polypeptide is Ribosome-recycling factor (Chlorobium phaeovibrioides (strain DSM 265 / 1930) (Prosthecochloris vibrioformis (strain DSM 265))).